Reading from the N-terminus, the 194-residue chain is Peptidyl-tRNA hydrolase (194 aa).

Tyrosine 17 lines the tRNA pocket. Residue histidine 22 is the Proton acceptor of the active site. Tyrosine 68, asparagine 70, and asparagine 116 together coordinate tRNA.

Belongs to the PTH family. In terms of assembly, monomer.

It is found in the cytoplasm. It catalyses the reaction an N-acyl-L-alpha-aminoacyl-tRNA + H2O = an N-acyl-L-amino acid + a tRNA + H(+). Its function is as follows. Hydrolyzes ribosome-free peptidyl-tRNAs (with 1 or more amino acids incorporated), which drop off the ribosome during protein synthesis, or as a result of ribosome stalling. Catalyzes the release of premature peptidyl moieties from peptidyl-tRNA molecules trapped in stalled 50S ribosomal subunits, and thus maintains levels of free tRNAs and 50S ribosomes. This chain is Peptidyl-tRNA hydrolase, found in Chromohalobacter salexigens (strain ATCC BAA-138 / DSM 3043 / CIP 106854 / NCIMB 13768 / 1H11).